Consider the following 102-residue polypeptide: RNA-binding protein Hfq (102 aa).

The Sm domain maps to 9-68 (DPFLNALRRERVPVSIYLVNGIKLQGQIESFDQFVILLKNTVSQMVYKHAISTVVPSRPV). The disordered stretch occupies residues 63–102 (VPSRPVSHHSNNAGGSTSSNYHHGSSAQNTSAQQDSEENE). A compositionally biased stretch (polar residues) spans 70-96 (HHSNNAGGSTSSNYHHGSSAQNTSAQQ).

The protein belongs to the Hfq family. As to quaternary structure, homohexamer.

RNA chaperone that binds small regulatory RNA (sRNAs) and mRNAs to facilitate mRNA translational regulation in response to envelope stress, environmental stress and changes in metabolite concentrations. Also binds with high specificity to tRNAs. The chain is RNA-binding protein Hfq from Escherichia coli O17:K52:H18 (strain UMN026 / ExPEC).